Reading from the N-terminus, the 346-residue chain is MEEKIRLTQYSHGAGUGCKISPKVLGTILHSELEKFYDPNLIVGNETADDAAVYDLGNGTAIISTTDFFMPIVDDPFDFGRIAATNAISDIFAMGGKPIMGIAILGFPTNVLPAEVAQKIVDGGRFACHQAGIALAGGHSIDSPEPIFGLAVTGVIDTEKVKRNASAKSGCKLYMTKPLGIGILTTAEKKGKLKPEHQGLATAAMCQMNSIGSQFSQVDGVTAMTDVTGFGLLGHLIEICEGSNLSAVVFSDKIKTLDGVKDYIAQGCVPGGTGRNFDSYGHKVGILTEEQKAILCDPQTSGGLLVAVELNSVQTVIDIAKDAGIDLYEVGKLKPKSESDIVVEVK.

U16 is a catalytic residue. U16 is a non-standard amino acid (selenocysteine). ATP contacts are provided by residues K19 and 47–49; that span reads TAD. Residue D50 coordinates Mg(2+). Residues D67, D90, and 138–140 each bind ATP; that span reads GHS. Residue D90 coordinates Mg(2+). Mg(2+) is bound at residue D226.

The protein belongs to the selenophosphate synthase 1 family. Class I subfamily. Homodimer. Requires Mg(2+) as cofactor.

It carries out the reaction hydrogenselenide + ATP + H2O = selenophosphate + AMP + phosphate + 2 H(+). Synthesizes selenophosphate from selenide and ATP. The protein is Selenide, water dikinase of Haemophilus influenzae (strain ATCC 51907 / DSM 11121 / KW20 / Rd).